Reading from the N-terminus, the 371-residue chain is Aminomethyltransferase (371 aa).

This sequence belongs to the GcvT family. As to quaternary structure, the glycine cleavage system is composed of four proteins: P, T, L and H.

It carries out the reaction N(6)-[(R)-S(8)-aminomethyldihydrolipoyl]-L-lysyl-[protein] + (6S)-5,6,7,8-tetrahydrofolate = N(6)-[(R)-dihydrolipoyl]-L-lysyl-[protein] + (6R)-5,10-methylene-5,6,7,8-tetrahydrofolate + NH4(+). In terms of biological role, the glycine cleavage system catalyzes the degradation of glycine. The protein is Aminomethyltransferase of Pectobacterium carotovorum subsp. carotovorum (strain PC1).